Consider the following 37-residue polypeptide: Large ribosomal subunit protein bL36 (37 aa).

The protein belongs to the bacterial ribosomal protein bL36 family.

The sequence is that of Large ribosomal subunit protein bL36 from Pasteurella multocida (strain Pm70).